Consider the following 311-residue polypeptide: Lipoyl synthase (311 aa).

Residues C47, C52, C58, C73, C77, C80, and S286 each coordinate [4Fe-4S] cluster. Positions 59–276 (WSRHTATYLA…RSVGESLGLF (218 aa)) constitute a Radical SAM core domain.

The protein belongs to the radical SAM superfamily. Lipoyl synthase family. The cofactor is [4Fe-4S] cluster.

The protein localises to the cytoplasm. It catalyses the reaction [[Fe-S] cluster scaffold protein carrying a second [4Fe-4S](2+) cluster] + N(6)-octanoyl-L-lysyl-[protein] + 2 oxidized [2Fe-2S]-[ferredoxin] + 2 S-adenosyl-L-methionine + 4 H(+) = [[Fe-S] cluster scaffold protein] + N(6)-[(R)-dihydrolipoyl]-L-lysyl-[protein] + 4 Fe(3+) + 2 hydrogen sulfide + 2 5'-deoxyadenosine + 2 L-methionine + 2 reduced [2Fe-2S]-[ferredoxin]. It participates in protein modification; protein lipoylation via endogenous pathway; protein N(6)-(lipoyl)lysine from octanoyl-[acyl-carrier-protein]: step 2/2. Its function is as follows. Catalyzes the radical-mediated insertion of two sulfur atoms into the C-6 and C-8 positions of the octanoyl moiety bound to the lipoyl domains of lipoate-dependent enzymes, thereby converting the octanoylated domains into lipoylated derivatives. This Chlamydia trachomatis serovar A (strain ATCC VR-571B / DSM 19440 / HAR-13) protein is Lipoyl synthase.